A 378-amino-acid chain; its full sequence is Pseudouridine kinase (378 aa).

Residues aspartate 12, threonine 26, 37 to 41 (GVARN), valine 38, asparagine 137, and lysine 166 each bind pseudouridine. Mg(2+)-binding residues include serine 181 and threonine 237. Residues threonine 237, glycine 239, glycine 242, threonine 298, leucine 306, and glycine 310 each coordinate ATP. Aspartate 311 lines the pseudouridine pocket.

Belongs to the carbohydrate kinase PfkB family. In terms of assembly, forms homodimers.

It localises to the peroxisome. The catalysed reaction is pseudouridine + ATP = psi-UMP + ADP + H(+). In terms of biological role, catalyzes the phosphorylation of pseudouridine to pseudouridine 5'-phosphate (PsiMP). Catalyzes the first step in a pseudouridine degradation pathway. Acts together with the pseudouridine 5'-phosphate glycosidase PUMY in the peroxisome to prevent toxic pseudouridine monophosphate accumulation. This chain is Pseudouridine kinase, found in Arabidopsis thaliana (Mouse-ear cress).